Reading from the N-terminus, the 377-residue chain is Chorismate synthase (377 aa).

Arg-47 serves as a coordination point for NADP(+). FMN contacts are provided by residues 124-126 (RSS), 252-253 (NS), Gly-296, 311-315 (KPTPS), and Arg-338.

It belongs to the chorismate synthase family. The cofactor is FMNH2.

The catalysed reaction is 5-O-(1-carboxyvinyl)-3-phosphoshikimate = chorismate + phosphate. The protein operates within metabolic intermediate biosynthesis; chorismate biosynthesis; chorismate from D-erythrose 4-phosphate and phosphoenolpyruvate: step 7/7. Functionally, catalyzes the anti-1,4-elimination of the C-3 phosphate and the C-6 proR hydrogen from 5-enolpyruvylshikimate-3-phosphate (EPSP) to yield chorismate, which is the branch point compound that serves as the starting substrate for the three terminal pathways of aromatic amino acid biosynthesis. This reaction introduces a second double bond into the aromatic ring system. The protein is Chorismate synthase of Methanococcus vannielii (strain ATCC 35089 / DSM 1224 / JCM 13029 / OCM 148 / SB).